The sequence spans 1100 residues: Regulator of nonsense transcripts 1 (1100 aa).

Positions 42 to 53 (SQTQTQGQTQSQ) are enriched in low complexity. A disordered region spans residues 42–67 (SQTQTQGQTQSQLDNQVNGPDGVLPN). The region spanning 94-251 (TKDLPVHACS…NKLEELWKEN (158 aa)) is the Upf1 CH-rich domain. Cys102, Cys105, Cys116, Ser119, Cys124, His134, His138, Cys144, Cys162, Cys165, Cys188, and Cys192 together coordinate Zn(2+). A C3H region spans residues 102 to 134 (CSYCGIHDPACVVYCNTSKKWFCNGRGNTSGSH). Residues 116 to 144 (CNTSKKWFCNGRGNTSGSHIVNHLVRAKC) are CC/SHH/C. The C4 stretch occupies residues 162–192 (CYNCGCRNVFLLGFIPAKADSVVVLLCRQPC). ATP-binding positions include Gln455, 475–479 (GTGKT), Gln645, Tyr682, and Glu813. The segment at 978-1065 (LGQVNGPAAG…QPELSQDSYL (88 aa)) is disordered. Residues 982 to 993 (NGPAAGRGAPKG) show a composition bias toward low complexity. Residues 1012–1063 (SGQPNMPNSQASQDLVSQPFSQGPLTQGYITMSQPSQMSQPGLSQPELSQDS) show a composition bias toward polar residues.

Belongs to the DNA2/NAM7 helicase family.

The protein resides in the cytoplasm. It is found in the P-body. Its subcellular location is the nucleus. The protein localises to the perinuclear region. Its function is as follows. RNA-dependent helicase and ATPase required for nonsense-mediated decay (NMD) of mRNAs containing premature stop codons. Is recruited to mRNAs upon translation termination and undergoes a cycle of phosphorylation and dephosphorylation; its phosphorylation appears to be a key step in NMD. The formation of an upf1-upf2-upf3 surveillance complex is believed to activate NMD. This is Regulator of nonsense transcripts 1 from Danio rerio (Zebrafish).